We begin with the raw amino-acid sequence, 205 residues long: Small ribosomal subunit protein uS4 (205 aa).

A disordered region spans residues 27–46 (LNKRDYAPGQHGQRRKGKPS). The region spanning 118–178 (HGHVLVNGKR…HVDHRLMKGT (61 aa)) is the S4 RNA-binding domain.

The protein belongs to the universal ribosomal protein uS4 family. Part of the 30S ribosomal subunit. Contacts protein S5. The interaction surface between S4 and S5 is involved in control of translational fidelity.

Its function is as follows. One of the primary rRNA binding proteins, it binds directly to 16S rRNA where it nucleates assembly of the body of the 30S subunit. Functionally, with S5 and S12 plays an important role in translational accuracy. The sequence is that of Small ribosomal subunit protein uS4 from Granulibacter bethesdensis (strain ATCC BAA-1260 / CGDNIH1).